Reading from the N-terminus, the 285-residue chain is Pantothenate synthetase (285 aa).

Residue 30–37 (MGYLHEGH) coordinates ATP. The active-site Proton donor is His-37. Position 61 (Gln-61) interacts with (R)-pantoate. Beta-alanine is bound at residue Gln-61. An ATP-binding site is contributed by 148-151 (GKKD). Gln-154 is a (R)-pantoate binding site. ATP-binding positions include Ile-177 and 185 to 188 (LSSR).

The protein belongs to the pantothenate synthetase family. Homodimer.

Its subcellular location is the cytoplasm. The catalysed reaction is (R)-pantoate + beta-alanine + ATP = (R)-pantothenate + AMP + diphosphate + H(+). Its pathway is cofactor biosynthesis; (R)-pantothenate biosynthesis; (R)-pantothenate from (R)-pantoate and beta-alanine: step 1/1. Its function is as follows. Catalyzes the condensation of pantoate with beta-alanine in an ATP-dependent reaction via a pantoyl-adenylate intermediate. The chain is Pantothenate synthetase from Leptospira borgpetersenii serovar Hardjo-bovis (strain JB197).